A 331-amino-acid chain; its full sequence is Aflatoxin B1 aldehyde reductase member 4 (331 aa).

Asp-44 lines the NADP(+) pocket. Tyr-49 acts as the Proton donor in catalysis. The residue at position 85 (Ser-85) is a Phosphoserine. His-113 is a substrate binding site. NADP(+)-binding positions include 143–144 (SN), Gln-169, 198–208 (NPLAGGLLTGK), and Arg-222. Tyr-232 contributes to the substrate binding site. 290–298 (SSLEQLEQN) serves as a coordination point for NADP(+).

It belongs to the aldo/keto reductase family. Aldo/keto reductase 2 subfamily. In terms of tissue distribution, mainly expressed in uterus.

Can reduce the dialdehyde protein-binding form of aflatoxin B1 (AFB1) to the non-binding AFB1 dialcohol. May be involved in protection of liver against the toxic and carcinogenic effects of AFB1, a potent hepatocarcinogen. This Homo sapiens (Human) protein is Aflatoxin B1 aldehyde reductase member 4 (AKR7L).